The primary structure comprises 466 residues: GATA-binding factor 2 (466 aa).

2 stretches are compositionally biased toward low complexity: residues 139–155 (GSST…TPAS) and 174–188 (PDPN…SSSA). The interval 139–196 (GSSTSSTASVSSLTPASHSGSHLFGFPPTPPKEVSPDPNSTSAASPSSSAGARQEDKD) is disordered. 2 GATA-type zinc fingers span residues 281–305 (CVNC…CNAC) and 335–359 (CANC…CNAC). Residues 436-466 (GHILPTPTPIHPSSSISFGHPHPSSMVTAMG) form a disordered region.

Expressed in all developmental stages of erythroid cells but is additionally found in a limited subset of other tissues.

It localises to the nucleus. In terms of biological role, transcriptional activator which probably serves as a general switch factor for cell-specific development. It binds to DNA sites with the consensus sequence 5'-[AT]GATA[AG]-3' within regulatory regions of genes. The protein is GATA-binding factor 2 (GATA2) of Gallus gallus (Chicken).